The chain runs to 64 residues: Prokaryotic ubiquitin-like protein Pup (64 aa).

Residues 1 to 35 (MAQGGQVSAGGGRRDDDEPIEQTSGAGTQQVNVTG) are disordered. Residues 21–33 (EQTSGAGTQQVNV) are compositionally biased toward polar residues. The tract at residues 21–58 (EQTSGAGTQQVNVTGTDDLLDEIDGLLENNAEEFVRSY) is ARC ATPase binding. Gln64 is modified (deamidated glutamine). Gln64 is covalently cross-linked (Isoglutamyl lysine isopeptide (Gln-Lys) (interchain with K-? in acceptor proteins)).

Belongs to the prokaryotic ubiquitin-like protein family. Strongly interacts with the proteasome-associated ATPase ARC through a hydrophobic interface; the interacting region of Pup lies in its C-terminal half. There is one Pup binding site per ARC hexamer ring. Post-translationally, is modified by deamidation of its C-terminal glutamine to glutamate by the deamidase Dop, a prerequisite to the subsequent pupylation process.

It functions in the pathway protein degradation; proteasomal Pup-dependent pathway. Protein modifier that is covalently attached to lysine residues of substrate proteins, thereby targeting them for proteasomal degradation. The tagging system is termed pupylation. The sequence is that of Prokaryotic ubiquitin-like protein Pup from Corynebacterium jeikeium (strain K411).